Consider the following 279-residue polypeptide: Pantothenate synthetase (279 aa).

Residue 26-33 coordinates ATP; sequence MGGLHEGH. The active-site Proton donor is His-33. Gln-57 serves as a coordination point for (R)-pantoate. Residue Gln-57 coordinates beta-alanine. An ATP-binding site is contributed by 143–146; it reads GKKD. Gln-149 is a binding site for (R)-pantoate. ATP contacts are provided by residues Val-172 and 180–183; that span reads LSSR.

Belongs to the pantothenate synthetase family. In terms of assembly, homodimer.

The protein resides in the cytoplasm. The enzyme catalyses (R)-pantoate + beta-alanine + ATP = (R)-pantothenate + AMP + diphosphate + H(+). The protein operates within cofactor biosynthesis; (R)-pantothenate biosynthesis; (R)-pantothenate from (R)-pantoate and beta-alanine: step 1/1. Functionally, catalyzes the condensation of pantoate with beta-alanine in an ATP-dependent reaction via a pantoyl-adenylate intermediate. The protein is Pantothenate synthetase of Nitrosospira multiformis (strain ATCC 25196 / NCIMB 11849 / C 71).